We begin with the raw amino-acid sequence, 255 residues long: UPF0246 protein DP0358 (255 aa).

This sequence belongs to the UPF0246 family.

The polypeptide is UPF0246 protein DP0358 (Desulfotalea psychrophila (strain LSv54 / DSM 12343)).